A 475-amino-acid chain; its full sequence is F-box/kelch-repeat protein At1g22040 (475 aa).

The segment at Met1–Arg28 is disordered. The F-box domain maps to Cys41 to Arg87. 5 Kelch repeats span residues Glu94–Ser140, Gly182–Lys228, Lys229–Ala279, Pro306–Glu350, and Tyr352–Gly401.

This is F-box/kelch-repeat protein At1g22040 from Arabidopsis thaliana (Mouse-ear cress).